The sequence spans 793 residues: Xaa-Pro dipeptidyl-peptidase (793 aa).

Active-site charge relay system residues include Ser-363, Asp-483, and His-514.

Belongs to the peptidase S15 family. In terms of assembly, homodimer.

It localises to the cytoplasm. The enzyme catalyses Hydrolyzes Xaa-Pro-|- bonds to release unblocked, N-terminal dipeptides from substrates including Ala-Pro-|-p-nitroanilide and (sequentially) Tyr-Pro-|-Phe-Pro-|-Gly-Pro-|-Ile.. Its function is as follows. Removes N-terminal dipeptides sequentially from polypeptides having unsubstituted N-termini provided that the penultimate residue is proline. The sequence is that of Xaa-Pro dipeptidyl-peptidase from Lactobacillus helveticus (strain DPC 4571).